Reading from the N-terminus, the 195-residue chain is Imidazoleglycerol-phosphate dehydratase (195 aa).

It belongs to the imidazoleglycerol-phosphate dehydratase family.

The protein resides in the cytoplasm. It carries out the reaction D-erythro-1-(imidazol-4-yl)glycerol 3-phosphate = 3-(imidazol-4-yl)-2-oxopropyl phosphate + H2O. It participates in amino-acid biosynthesis; L-histidine biosynthesis; L-histidine from 5-phospho-alpha-D-ribose 1-diphosphate: step 6/9. The polypeptide is Imidazoleglycerol-phosphate dehydratase (Leuconostoc mesenteroides subsp. mesenteroides (strain ATCC 8293 / DSM 20343 / BCRC 11652 / CCM 1803 / JCM 6124 / NCDO 523 / NBRC 100496 / NCIMB 8023 / NCTC 12954 / NRRL B-1118 / 37Y)).